The following is a 398-amino-acid chain: Acetate kinase 1 (398 aa).

A Mg(2+)-binding site is contributed by asparagine 10. Lysine 17 lines the ATP pocket. Residue arginine 89 coordinates substrate. Residue aspartate 146 is the Proton donor/acceptor of the active site. ATP is bound by residues 206–210, 281–283, and 329–333; these read HLGNG, DCR, and GIGEN. Mg(2+) is bound at residue glutamate 384.

It belongs to the acetokinase family. In terms of assembly, homodimer. Mg(2+) is required as a cofactor. The cofactor is Mn(2+).

It is found in the cytoplasm. It carries out the reaction acetate + ATP = acetyl phosphate + ADP. It participates in metabolic intermediate biosynthesis; acetyl-CoA biosynthesis; acetyl-CoA from acetate: step 1/2. Catalyzes the formation of acetyl phosphate from acetate and ATP. Can also catalyze the reverse reaction. The protein is Acetate kinase 1 of Neisseria meningitidis serogroup A / serotype 4A (strain DSM 15465 / Z2491).